A 323-amino-acid polypeptide reads, in one-letter code: Aldo-keto reductase family 1 member C4 (323 aa).

NADP(+)-binding positions include 20-24 (GFGTY) and Asp50. Tyr55 serves as the catalytic Proton donor. His117 is a binding site for substrate. Residues 166–167 (SN), Gln190, 216–221 (HSALGT), and 270–280 (KSYNEQRIREN) contribute to the NADP(+) site.

The protein belongs to the aldo/keto reductase family. In terms of assembly, monomer. The N-terminus is blocked. Liver specific.

The protein localises to the cytoplasm. Its subcellular location is the cytosol. The catalysed reaction is a 3alpha-hydroxysteroid + NADP(+) = a 3-oxosteroid + NADPH + H(+). It catalyses the reaction a 3alpha-hydroxysteroid + NAD(+) = a 3-oxosteroid + NADH + H(+). It carries out the reaction 5alpha-androstane-3alpha,17beta-diol + NADP(+) = 17beta-hydroxy-5alpha-androstan-3-one + NADPH + H(+). The enzyme catalyses 5alpha-androstane-3beta,17beta-diol + NADP(+) = 17beta-hydroxy-5alpha-androstan-3-one + NADPH + H(+). The catalysed reaction is 5alpha-androstane-3alpha,17beta-diol + NAD(+) = 17beta-hydroxy-5alpha-androstan-3-one + NADH + H(+). It catalyses the reaction 17beta-estradiol + NADP(+) = estrone + NADPH + H(+). It carries out the reaction 17beta-estradiol + NAD(+) = estrone + NADH + H(+). The enzyme catalyses (20S)-hydroxypregn-4-en-3-one + NADP(+) = progesterone + NADPH + H(+). The catalysed reaction is (20S)-hydroxypregn-4-en-3-one + NAD(+) = progesterone + NADH + H(+). It catalyses the reaction androsterone + NADP(+) = 5alpha-androstan-3,17-dione + NADPH + H(+). It carries out the reaction testosterone + NADP(+) = androst-4-ene-3,17-dione + NADPH + H(+). The enzyme catalyses testosterone + NAD(+) = androst-4-ene-3,17-dione + NADH + H(+). The catalysed reaction is 3alpha-hydroxy-5alpha-androstane 17-O-(beta-D-glucuronate) + NADP(+) = 5alpha-dihydrotestosterone 17-O-(beta-D-glucuronate) + NADPH + H(+). It catalyses the reaction (3beta,5alpha,17beta)-3-hydroxy-androstan-17-yl sulfate + NADP(+) = 5alpha-dihydrotestosterone sulfate + NADPH + H(+). It carries out the reaction 5alpha-androstane-3alpha,17beta-diol + NAD(+) = androsterone + NADH + H(+). The enzyme catalyses chlordecone alcohol + NADP(+) = chlordecone + NADPH + H(+). The protein operates within steroid metabolism. Its activity is regulated as follows. Inhibited by nonsteroidal the anti-inflammatory drugs (NSAID) flufenamic. The oxidation reaction is inhibited by low micromolar concentrations of NADPH. Functionally, cytosolic aldo-keto reductase that catalyzes the NADH and NADPH-dependent reduction of ketosteroids to hydroxysteroids. Liver specific enzyme that acts as an NAD(P)(H)-dependent 3-, 17- and 20-ketosteroid reductase on the steroid nucleus and side chain. Displays the ability to catalyze both oxidation and reduction in vitro, but most probably acts as a reductase in vivo since the oxidase activity measured in vitro is inhibited by physiological concentration of NADPH. Acts preferentially as a 3-alpha-hydroxysteroid dehydrogenase (HSD) with a subsidiary 3-beta-HSD activity. Catalyzes efficiently the transformation of the potent androgen 5-alpha-dihydrotestosterone (5alpha-DHT or 17beta-hydroxy-5alpha-androstan-3-one) into the less active form, 5-alpha-androstan-3-alpha,17-beta-diol (3-alpha-diol). Catalyzes the reduction of estrone into 17beta-estradiol but with low efficiency. Metabolizes a broad spectrum of natural and synthetic therapeutic steroid and plays an important role in metabolism of androgens, estrogens, progestereone and conjugated steroids. Catalyzes the biotransformation of the pesticide chlordecone (kepone) to its corresponding alcohol leading to increased biliary excretion of the pesticide and concomitant reduction of its neurotoxicity since bile is the major excretory route. This chain is Aldo-keto reductase family 1 member C4 (AKR1C4), found in Homo sapiens (Human).